A 728-amino-acid polypeptide reads, in one-letter code: Ankyrin repeat protein A (728 aa).

5 ANK repeats span residues 381 to 410, 429 to 458, 477 to 506, 525 to 554, and 573 to 602; these read INLPGLYLAINYGNADIVETIFNSLSETGY, NGFSGLFLAISRKDKNVVTSILNALPKLAA, TSSHVLYHVMANGDADMLKIVLNALPLLIR, YGCPGLYLAMQNGHSDIVKVILEALPSLAQ, and ARDTGLFMAMQRGHMNVINTIFNALPTLFN.

It belongs to the Toxin_15 family.

In Escherichia coli (strain K12), this protein is Ankyrin repeat protein A (arpA).